The following is an 806-amino-acid chain: G-type lectin S-receptor-like serine/threonine-protein kinase At1g61430 (806 aa).

The signal sequence occupies residues 1 to 24 (MGKKRIVFFAYLPFFTIFMSFSFA). One can recognise a Bulb-type lectin domain in the interval 25–144 (GITKESPFSI…VSGRTLWQSF (120 aa)). Over 25–425 (GITKESPFSI…ELDVNKRKMT (401 aa)) the chain is Extracellular. Residues asparagine 53, asparagine 94, asparagine 117, and asparagine 236 are each glycosylated (N-linked (GlcNAc...) asparagine). One can recognise an EGF-like domain in the interval 277 to 313 (PANSCDIYGVCGPFGLCVVSIPPKCKCFKGFVPKFAK). 2 disulfide bridges follow: cysteine 281/cysteine 293 and cysteine 287/cysteine 301. N-linked (GlcNAc...) asparagine glycans are attached at residues asparagine 319, asparagine 335, and asparagine 374. The region spanning 332–414 (CQGNSSGKDA…GELLSIRLAR (83 aa)) is the PAN domain. Disulfide bonds link cysteine 367-cysteine 388 and cysteine 371-cysteine 377. A helical membrane pass occupies residues 426–446 (IVASTVSLTLFVIFGFAAFGF). Over 447-806 (WRCRVEHNAH…EMTESVIQGR (360 aa)) the chain is Cytoplasmic. One can recognise a Protein kinase domain in the interval 489–777 (FSLSNKLGPG…DLPLPKKPTF (289 aa)). Residues 495 to 503 (LGPGGFGSV) and lysine 520 contribute to the ATP site. Residues serine 526 and serine 541 each carry the phosphoserine modification. Positions 581-598 (RKKLELDWPKRFEIIEGI) are caM-binding. Aspartate 617 acts as the Proton acceptor in catalysis. A phosphoserine mark is found at serine 621 and serine 634. Threonine 651 carries the post-translational modification Phosphothreonine. 3 positions are modified to phosphoserine: serine 694, serine 695, and serine 788.

It belongs to the protein kinase superfamily. Ser/Thr protein kinase family.

It localises to the cell membrane. The catalysed reaction is L-seryl-[protein] + ATP = O-phospho-L-seryl-[protein] + ADP + H(+). It catalyses the reaction L-threonyl-[protein] + ATP = O-phospho-L-threonyl-[protein] + ADP + H(+). This chain is G-type lectin S-receptor-like serine/threonine-protein kinase At1g61430, found in Arabidopsis thaliana (Mouse-ear cress).